A 319-amino-acid polypeptide reads, in one-letter code: tRNA-modifying protein YgfZ (319 aa).

The folate site is built by Trp27 and Trp189.

It belongs to the tRNA-modifying YgfZ family.

Its subcellular location is the cytoplasm. In terms of biological role, folate-binding protein involved in regulating the level of ATP-DnaA and in the modification of some tRNAs. It is probably a key factor in regulatory networks that act via tRNA modification, such as initiation of chromosomal replication. In Buchnera aphidicola subsp. Acyrthosiphon pisum (strain APS) (Acyrthosiphon pisum symbiotic bacterium), this protein is tRNA-modifying protein YgfZ.